The sequence spans 225 residues: Golgi to ER traffic protein 1 (225 aa).

Methionine 1 is a topological domain (lumenal). A helical transmembrane segment spans residues 2–21 (NWVIIAALFFVIINKLLQYT). The Cytoplasmic portion of the chain corresponds to 22–107 (SRYQEAWINK…SQSKLFNRLK (86 aa)). Residues 37–104 (DISSLSKEYS…AKDSQSKLFN (68 aa)) are a coiled coil. Residues 108–128 (LLTLTLPFMILKLWKGKFIVY) traverse the membrane as a helical segment. At 129-172 (DIPTKDTFPVIVNGVLSQGLLYIPLLPINFLRGIDPNKHILVPG) the chain is on the lumenal side. The helical transmembrane segment at 173–189 (VSLGIWLMALTKTIDTV) threads the bilayer. The Cytoplasmic segment spans residues 190–225 (EFIVKQLVFQPVVSKQVKEKTKEKVVELKTTEAELD).

Belongs to the WRB/GET1 family. In terms of assembly, component of the Golgi to ER traffic (GET) complex, which is composed of GET1, GET2 and GET3. Within the complex, GET1 and GET2 form a heterotetramer which is stabilized by phosphatidylinositol binding and which binds to the GET3 homodimer.

The protein localises to the endoplasmic reticulum membrane. Its subcellular location is the golgi apparatus membrane. Functionally, required for the post-translational delivery of tail-anchored (TA) proteins to the endoplasmic reticulum. Together with GET2, acts as a membrane receptor for soluble GET3, which recognizes and selectively binds the transmembrane domain of TA proteins in the cytosol. The GET complex cooperates with the HDEL receptor ERD2 to mediate the ATP-dependent retrieval of resident ER proteins that contain a C-terminal H-D-E-L retention signal from the Golgi to the ER. The chain is Golgi to ER traffic protein 1 from Vanderwaltozyma polyspora (strain ATCC 22028 / DSM 70294 / BCRC 21397 / CBS 2163 / NBRC 10782 / NRRL Y-8283 / UCD 57-17) (Kluyveromyces polysporus).